The sequence spans 342 residues: MFTITQPDTQPSDHIQHKIDNKTKPLGALGQLEAVALQLALIQQTEKIEIRHPHLLVFAGDHGIAQHSLSIAPSEVTAQMVANFLAGGAAINCFCRTNDMALKVIDAGIKVEPEDHPNLIKQRLGHGTEDFSQYAAMTDNTVLQALEYGANVVEVLNQQSCNLVGFGEMGIGNTSSAAAIMAALLNIPADECVGRGTGIDDQQLQRKVDLITQALDLHAEQLSDPLSILASVGGFEIAQIVGGMLKAAENKMTVLVDGFISTAAAMLAVSMHPEANHYFIYCHCSDESGHQRMLQHLNATPLLSLGLRLGEGTGAALALPLLRSACCFYNEMASFEDAGVTV.

Glutamate 311 (proton acceptor) is an active-site residue.

It belongs to the CobT family.

The catalysed reaction is 5,6-dimethylbenzimidazole + nicotinate beta-D-ribonucleotide = alpha-ribazole 5'-phosphate + nicotinate + H(+). It functions in the pathway nucleoside biosynthesis; alpha-ribazole biosynthesis; alpha-ribazole from 5,6-dimethylbenzimidazole: step 1/2. In terms of biological role, catalyzes the synthesis of alpha-ribazole-5'-phosphate from nicotinate mononucleotide (NAMN) and 5,6-dimethylbenzimidazole (DMB). The polypeptide is Nicotinate-nucleotide--dimethylbenzimidazole phosphoribosyltransferase (Photobacterium profundum (strain SS9)).